A 401-amino-acid chain; its full sequence is S-adenosylmethionine synthase (401 aa).

H15 lines the ATP pocket. Residue D17 participates in Mg(2+) binding. Position 48 (E48) interacts with K(+). The L-methionine site is built by E61 and Q104. Residues 104-114 form a flexible loop region; it reads QSPDIALGVDR. ATP is bound by residues 179 to 181, 246 to 247, D255, 261 to 262, A278, and K282; these read DGK, RF, and RK. Residue D255 coordinates L-methionine. Residue K286 participates in L-methionine binding.

This sequence belongs to the AdoMet synthase family. Homotetramer; dimer of dimers. It depends on Mg(2+) as a cofactor. The cofactor is K(+).

The protein localises to the cytoplasm. The catalysed reaction is L-methionine + ATP + H2O = S-adenosyl-L-methionine + phosphate + diphosphate. It participates in amino-acid biosynthesis; S-adenosyl-L-methionine biosynthesis; S-adenosyl-L-methionine from L-methionine: step 1/1. Its function is as follows. Catalyzes the formation of S-adenosylmethionine (AdoMet) from methionine and ATP. The overall synthetic reaction is composed of two sequential steps, AdoMet formation and the subsequent tripolyphosphate hydrolysis which occurs prior to release of AdoMet from the enzyme. This chain is S-adenosylmethionine synthase, found in Petrotoga mobilis (strain DSM 10674 / SJ95).